Consider the following 309-residue polypeptide: Bombesin receptor-activated protein C6orf89 homolog (309 aa).

At 1–59 the chain is on the cytoplasmic side; the sequence is MGSSLSEPCIYDKLSESIDILRQSGYRYGMSEREIEKFIKQVLETNEPRREPPQFPILR. The chain crosses the membrane as a helical span at residues 60-80; that stretch reads ATVKFVVAVGVVLMAVLVFTY. The Extracellular portion of the chain corresponds to 81–309; that stretch reads PQSPVLMGSV…QDVQCDSAVL (229 aa).

Homodimer.

The protein resides in the golgi apparatus membrane. It is found in the cytoplasm. In terms of biological role, exhibits histone deacetylase (HDAC) enhancer properties. May play a role in progression through the cell cycle. The protein is Bombesin receptor-activated protein C6orf89 homolog of Danio rerio (Zebrafish).